The chain runs to 92 residues: Small ribosomal subunit protein uS19 (92 aa).

It belongs to the universal ribosomal protein uS19 family.

In terms of biological role, protein S19 forms a complex with S13 that binds strongly to the 16S ribosomal RNA. The polypeptide is Small ribosomal subunit protein uS19 (Sinorhizobium medicae (strain WSM419) (Ensifer medicae)).